We begin with the raw amino-acid sequence, 582 residues long: TBCC domain-containing protein 1 (582 aa).

The span at 140–153 (EWPSPRSRSPSSSS) shows a compositional bias: low complexity. Residues 140 to 159 (EWPSPRSRSPSSSSSERDAK) form a disordered region. Residues 305–451 (PPGSRLVLMS…LWNQPLLFGV (147 aa)) form the C-CAP/cofactor C-like domain. The span at 547–558 (SLLPPTITPSSS) shows a compositional bias: low complexity. The disordered stretch occupies residues 547 to 582 (SLLPPTITPSSSAEHWSSNQNTLKEQTHEQPTGTVC). The span at 559–582 (AEHWSSNQNTLKEQTHEQPTGTVC) shows a compositional bias: polar residues.

The protein belongs to the TBCC family.

The protein localises to the cytoplasm. It is found in the cytoskeleton. It localises to the microtubule organizing center. Its subcellular location is the centrosome. The protein resides in the spindle pole. Functionally, may play a role in the regulation of centrosome and Golgi apparatus positioning. The sequence is that of TBCC domain-containing protein 1 (tbccd1) from Danio rerio (Zebrafish).